The following is a 404-amino-acid chain: 8-amino-7-oxononanoate synthase (404 aa).

Arg-20 serves as a coordination point for substrate. Position 116–117 (116–117 (GY)) interacts with pyridoxal 5'-phosphate. His-141 is a binding site for substrate. Positions 187, 215, and 243 each coordinate pyridoxal 5'-phosphate. Lys-246 is modified (N6-(pyridoxal phosphate)lysine). Position 366 (Thr-366) interacts with substrate.

It belongs to the class-II pyridoxal-phosphate-dependent aminotransferase family. BioF subfamily. As to quaternary structure, homodimer. Pyridoxal 5'-phosphate is required as a cofactor.

The catalysed reaction is 6-carboxyhexanoyl-[ACP] + L-alanine + H(+) = (8S)-8-amino-7-oxononanoate + holo-[ACP] + CO2. The protein operates within cofactor biosynthesis; biotin biosynthesis. In terms of biological role, catalyzes the decarboxylative condensation of pimeloyl-[acyl-carrier protein] and L-alanine to produce 8-amino-7-oxononanoate (AON), [acyl-carrier protein], and carbon dioxide. The chain is 8-amino-7-oxononanoate synthase from Cupriavidus taiwanensis (strain DSM 17343 / BCRC 17206 / CCUG 44338 / CIP 107171 / LMG 19424 / R1) (Ralstonia taiwanensis (strain LMG 19424)).